The primary structure comprises 428 residues: 3-phosphoshikimate 1-carboxyvinyltransferase (428 aa).

3-phosphoshikimate-binding residues include K22, S23, and R27. K22 provides a ligand contact to phosphoenolpyruvate. Positions 94 and 122 each coordinate phosphoenolpyruvate. S169, S170, Q171, S197, D315, and K342 together coordinate 3-phosphoshikimate. Q171 lines the phosphoenolpyruvate pocket. D315 acts as the Proton acceptor in catalysis. Positions 346, 389, and 414 each coordinate phosphoenolpyruvate.

The protein belongs to the EPSP synthase family. Monomer.

It localises to the cytoplasm. The enzyme catalyses 3-phosphoshikimate + phosphoenolpyruvate = 5-O-(1-carboxyvinyl)-3-phosphoshikimate + phosphate. The protein operates within metabolic intermediate biosynthesis; chorismate biosynthesis; chorismate from D-erythrose 4-phosphate and phosphoenolpyruvate: step 6/7. In terms of biological role, catalyzes the transfer of the enolpyruvyl moiety of phosphoenolpyruvate (PEP) to the 5-hydroxyl of shikimate-3-phosphate (S3P) to produce enolpyruvyl shikimate-3-phosphate and inorganic phosphate. The protein is 3-phosphoshikimate 1-carboxyvinyltransferase of Cellvibrio japonicus (strain Ueda107) (Pseudomonas fluorescens subsp. cellulosa).